The sequence spans 305 residues: tRNA dimethylallyltransferase (305 aa).

Position 8-15 (8-15 (GPTAIGKS)) interacts with ATP. 10 to 15 (TAIGKS) is a substrate binding site. Positions 33-36 (DSMA) are interaction with substrate tRNA.

The protein belongs to the IPP transferase family. Monomer. Requires Mg(2+) as cofactor.

The catalysed reaction is adenosine(37) in tRNA + dimethylallyl diphosphate = N(6)-dimethylallyladenosine(37) in tRNA + diphosphate. Catalyzes the transfer of a dimethylallyl group onto the adenine at position 37 in tRNAs that read codons beginning with uridine, leading to the formation of N6-(dimethylallyl)adenosine (i(6)A). The chain is tRNA dimethylallyltransferase from Aquifex aeolicus (strain VF5).